Reading from the N-terminus, the 113-residue chain is Large ribosomal subunit protein uL22 (113 aa).

The protein belongs to the universal ribosomal protein uL22 family. Part of the 50S ribosomal subunit.

This protein binds specifically to 23S rRNA; its binding is stimulated by other ribosomal proteins, e.g. L4, L17, and L20. It is important during the early stages of 50S assembly. It makes multiple contacts with different domains of the 23S rRNA in the assembled 50S subunit and ribosome. Its function is as follows. The globular domain of the protein is located near the polypeptide exit tunnel on the outside of the subunit, while an extended beta-hairpin is found that lines the wall of the exit tunnel in the center of the 70S ribosome. This chain is Large ribosomal subunit protein uL22, found in Bacillus cereus (strain ATCC 10987 / NRS 248).